Here is a 401-residue protein sequence, read N- to C-terminus: Nicotinate phosphoribosyltransferase (401 aa).

His224 is modified (phosphohistidine; by autocatalysis).

This sequence belongs to the NAPRTase family. In terms of processing, transiently phosphorylated on a His residue during the reaction cycle. Phosphorylation strongly increases the affinity for substrates and increases the rate of nicotinate D-ribonucleotide production. Dephosphorylation regenerates the low-affinity form of the enzyme, leading to product release.

It carries out the reaction nicotinate + 5-phospho-alpha-D-ribose 1-diphosphate + ATP + H2O = nicotinate beta-D-ribonucleotide + ADP + phosphate + diphosphate. It functions in the pathway cofactor biosynthesis; NAD(+) biosynthesis; nicotinate D-ribonucleotide from nicotinate: step 1/1. In terms of biological role, catalyzes the synthesis of beta-nicotinate D-ribonucleotide from nicotinate and 5-phospho-D-ribose 1-phosphate at the expense of ATP. The protein is Nicotinate phosphoribosyltransferase of Pseudomonas putida (strain GB-1).